A 697-amino-acid polypeptide reads, in one-letter code: tRNA 5-methylaminomethyl-2-thiouridine biosynthesis bifunctional protein MnmC (697 aa).

The tract at residues 1-275 (MTAKPHKSCQ…KPATLAAIDH (275 aa)) is tRNA (mnm(5)s(2)U34)-methyltransferase. The interval 280–697 (VGGGLASANL…LRKLLKGKAL (418 aa)) is FAD-dependent cmnm(5)s(2)U34 oxidoreductase.

It in the N-terminal section; belongs to the methyltransferase superfamily. tRNA (mnm(5)s(2)U34)-methyltransferase family. The protein in the C-terminal section; belongs to the DAO family. FAD is required as a cofactor.

It localises to the cytoplasm. It carries out the reaction 5-aminomethyl-2-thiouridine(34) in tRNA + S-adenosyl-L-methionine = 5-methylaminomethyl-2-thiouridine(34) in tRNA + S-adenosyl-L-homocysteine + H(+). Functionally, catalyzes the last two steps in the biosynthesis of 5-methylaminomethyl-2-thiouridine (mnm(5)s(2)U) at the wobble position (U34) in tRNA. Catalyzes the FAD-dependent demodification of cmnm(5)s(2)U34 to nm(5)s(2)U34, followed by the transfer of a methyl group from S-adenosyl-L-methionine to nm(5)s(2)U34, to form mnm(5)s(2)U34. The sequence is that of tRNA 5-methylaminomethyl-2-thiouridine biosynthesis bifunctional protein MnmC from Shewanella sp. (strain ANA-3).